The primary structure comprises 111 residues: Small ribosomal subunit protein bS16 (111 aa).

Belongs to the bacterial ribosomal protein bS16 family.

The polypeptide is Small ribosomal subunit protein bS16 (Rickettsia typhi (strain ATCC VR-144 / Wilmington)).